Reading from the N-terminus, the 277-residue chain is Tumor necrosis factor receptor superfamily member 4 (277 aa).

The first 28 residues, 1 to 28 (MCVGARRLGRGPCAALLLLGLGLSTVTG), serve as a signal peptide directing secretion. Residues 29-214 (LHCVGDTYPS…RPVEVPGGRA (186 aa)) are Extracellular-facing. 2 TNFR-Cys repeats span residues 30–65 (HCVG…TVCR) and 66–107 (PCGP…DTVC). 8 cysteine pairs are disulfide-bonded: cysteine 31–cysteine 42, cysteine 43–cysteine 56, cysteine 46–cysteine 64, cysteine 67–cysteine 81, cysteine 84–cysteine 99, cysteine 87–cysteine 107, cysteine 109–cysteine 125, and cysteine 128–cysteine 141. One copy of the TNFR-Cys 3; truncated repeat lies at 108–126 (RCRAGTQPLDSYKPGVDCA). The TNFR-Cys 4 repeat unit spans residues 127 to 167 (PCPPGHFSPGDNQACKPWTNCTLAGKHTLQPASNSSDAICE). N-linked (GlcNAc...) asparagine glycans are attached at residues asparagine 146 and asparagine 160. An intrachain disulfide couples cysteine 147 to cysteine 166. Residues 158–209 (ASNSSDAICEDRDPPATQPQETQGPPARPITVQPTEAWPRTSQGPSTRPVEV) form a disordered region. A helical transmembrane segment spans residues 215-235 (VAAILGLGLVLGLLGPLAILL). The Cytoplasmic portion of the chain corresponds to 236 to 277 (ALYLLRRDQRLPPDAHKPPGGGSFRTPIQEEQADAHSTLAKI). A disordered region spans residues 248–277 (PDAHKPPGGGSFRTPIQEEQADAHSTLAKI).

As to quaternary structure, interacts with TRAF2, TRAF3 and TRAF5. (Microbial infection) Interacts with Human herpesvirus 6B/HHV-6B gQ1:gQ2 proteins.

The protein resides in the membrane. In terms of biological role, receptor for TNFSF4/OX40L/GP34. Is a costimulatory molecule implicated in long-term T-cell immunity. (Microbial infection) Acts as a receptor for human herpesvirus 6B/HHV-6B. The chain is Tumor necrosis factor receptor superfamily member 4 (TNFRSF4) from Homo sapiens (Human).